The sequence spans 130 residues: Small ribosomal subunit protein uS9 (130 aa).

This sequence belongs to the universal ribosomal protein uS9 family.

The chain is Small ribosomal subunit protein uS9 from Bacillus anthracis (strain A0248).